Reading from the N-terminus, the 160-residue chain is SsrA-binding protein (160 aa).

The protein belongs to the SmpB family.

The protein resides in the cytoplasm. In terms of biological role, required for rescue of stalled ribosomes mediated by trans-translation. Binds to transfer-messenger RNA (tmRNA), required for stable association of tmRNA with ribosomes. tmRNA and SmpB together mimic tRNA shape, replacing the anticodon stem-loop with SmpB. tmRNA is encoded by the ssrA gene; the 2 termini fold to resemble tRNA(Ala) and it encodes a 'tag peptide', a short internal open reading frame. During trans-translation Ala-aminoacylated tmRNA acts like a tRNA, entering the A-site of stalled ribosomes, displacing the stalled mRNA. The ribosome then switches to translate the ORF on the tmRNA; the nascent peptide is terminated with the 'tag peptide' encoded by the tmRNA and targeted for degradation. The ribosome is freed to recommence translation, which seems to be the essential function of trans-translation. This Histophilus somni (strain 129Pt) (Haemophilus somnus) protein is SsrA-binding protein.